The chain runs to 256 residues: Imidazole glycerol phosphate synthase subunit HisF (256 aa).

Residues Asp11 and Asp130 contribute to the active site.

The protein belongs to the HisA/HisF family. Heterodimer of HisH and HisF.

The protein localises to the cytoplasm. The catalysed reaction is 5-[(5-phospho-1-deoxy-D-ribulos-1-ylimino)methylamino]-1-(5-phospho-beta-D-ribosyl)imidazole-4-carboxamide + L-glutamine = D-erythro-1-(imidazol-4-yl)glycerol 3-phosphate + 5-amino-1-(5-phospho-beta-D-ribosyl)imidazole-4-carboxamide + L-glutamate + H(+). It participates in amino-acid biosynthesis; L-histidine biosynthesis; L-histidine from 5-phospho-alpha-D-ribose 1-diphosphate: step 5/9. IGPS catalyzes the conversion of PRFAR and glutamine to IGP, AICAR and glutamate. The HisF subunit catalyzes the cyclization activity that produces IGP and AICAR from PRFAR using the ammonia provided by the HisH subunit. This is Imidazole glycerol phosphate synthase subunit HisF from Prochlorococcus marinus (strain NATL1A).